The sequence spans 301 residues: Glycosyltransferase GlyG (301 aa).

The protein belongs to the glycosyltransferase 2 family.

The protein operates within protein modification; protein glycosylation. Its function is as follows. Involved in the polymorphic O-glycosylation of the serine-rich repeat protein PsrP. Catalyzes the third step in glycosylation PsrP in this bacteria. Transfers glucose from UDP-glucose to the terminal glucose moiety of already-glycosylated PsrP (using truncated substrates with PsrP SSR1-GlcNAc-Glc). Has a marked preference for PsrP substrate that has already been modified by GlcNAc and glucose. In vitro has hydrolytic activity against UDP-glucose and to a lesser extent against UDP-galactose. Functionally, also catalyzes the fourth step in glycosylation of the serine-rich repeat protein PsrP in this bacteria. Can transfer the sugar from UDP-glucose (and much less well from UDP-galactose) to the terminal sugar moiety of PsrP-GlcNAc-Glc-Gal or of PsrP-GlcNAc-Glc-Glc. This Streptococcus pneumoniae serotype 4 (strain ATCC BAA-334 / TIGR4) protein is Glycosyltransferase GlyG.